A 229-amino-acid chain; its full sequence is UPF0319 protein Sbal223_2728 (229 aa).

An N-terminal signal peptide occupies residues 1–21; sequence MKSLLPISSLLVLLGSASAFA.

Belongs to the UPF0319 family.

This Shewanella baltica (strain OS223) protein is UPF0319 protein Sbal223_2728.